The chain runs to 58 residues: MFTLKKSLLLLFFLGTINLSLCEEERNAEEERRDEPDERDVQVEKRLSPNLLKSLLGK.

Residues 1 to 22 form the signal peptide; the sequence is MFTLKKSLLLLFFLGTINLSLC. The propeptide occupies 23-46; it reads EEERNAEEERRDEPDERDVQVEKR. The disordered stretch occupies residues 25-46; that stretch reads ERNAEEERRDEPDERDVQVEKR. At L56 the chain carries Leucine amide.

As to expression, expressed by the skin glands.

The protein resides in the secreted. In terms of biological role, antimicrobial peptide that renders both the outer and inner membrane of bacteria permeable to hydrophobic substances of low molecular mass. The sequence is that of Temporin-1Th from Rana temporaria (European common frog).